The sequence spans 360 residues: Pyrimidine monooxygenase RutA (360 aa).

FMN-binding positions include 49-50, Asn115, Glu124, 140-141, and Ser190; these read IK and RY.

Belongs to the NtaA/SnaA/DszA monooxygenase family. RutA subfamily.

It carries out the reaction uracil + FMNH2 + NADH + O2 = (Z)-3-ureidoacrylate + FMN + NAD(+) + H2O + H(+). The enzyme catalyses thymine + FMNH2 + NADH + O2 = (Z)-2-methylureidoacrylate + FMN + NAD(+) + H2O + H(+). In terms of biological role, catalyzes the pyrimidine ring opening between N-3 and C-4 by an unusual flavin hydroperoxide-catalyzed mechanism, adding oxygen atoms in the process to yield ureidoacrylate peracid, that immediately reacts with FMN forming ureidoacrylate and FMN-N(5)-oxide. The FMN-N(5)-oxide reacts spontaneously with NADH to produce FMN. Requires the flavin reductase RutF to regenerate FMN in vivo. This is Pyrimidine monooxygenase RutA from Pseudomonas syringae pv. syringae (strain B728a).